We begin with the raw amino-acid sequence, 187 residues long: Adenine phosphoribosyltransferase 1 (187 aa).

Phosphoserine is present on Ser-68. 133-137 (ATGGS) is a binding site for AMP.

This sequence belongs to the purine/pyrimidine phosphoribosyltransferase family. As to quaternary structure, homodimer. The cofactor is Mg(2+).

It localises to the cytoplasm. It is found in the nucleus. The enzyme catalyses AMP + diphosphate = 5-phospho-alpha-D-ribose 1-diphosphate + adenine. It participates in purine metabolism; AMP biosynthesis via salvage pathway; AMP from adenine: step 1/1. Its function is as follows. Catalyzes a salvage reaction resulting in the formation of AMP, that is energically less costly than de novo synthesis. The sequence is that of Adenine phosphoribosyltransferase 1 from Saccharomyces cerevisiae (strain ATCC 204508 / S288c) (Baker's yeast).